Reading from the N-terminus, the 39-residue chain is Photosystem II reaction center protein J (39 aa).

A helical membrane pass occupies residues 9 to 29 (LWLVVTFGGIVVLTVLGIFIY).

The protein belongs to the PsbJ family. In terms of assembly, PSII is composed of 1 copy each of membrane proteins PsbA, PsbB, PsbC, PsbD, PsbE, PsbF, PsbH, PsbI, PsbJ, PsbK, PsbL, PsbM, PsbT, PsbY, PsbZ, Psb30/Ycf12, at least 3 peripheral proteins of the oxygen-evolving complex and a large number of cofactors. It forms dimeric complexes.

Its subcellular location is the plastid. The protein resides in the chloroplast thylakoid membrane. Functionally, one of the components of the core complex of photosystem II (PSII). PSII is a light-driven water:plastoquinone oxidoreductase that uses light energy to abstract electrons from H(2)O, generating O(2) and a proton gradient subsequently used for ATP formation. It consists of a core antenna complex that captures photons, and an electron transfer chain that converts photonic excitation into a charge separation. This is Photosystem II reaction center protein J from Cyanidium caldarium (Red alga).